A 331-amino-acid polypeptide reads, in one-letter code: N-arachidonyl glycine receptor (331 aa).

At 1-26 the chain is on the extracellular side; sequence MAIPSNRDQLALSNGSHPEEYKIAAL. Asn-14 carries an N-linked (GlcNAc...) asparagine glycan. Residues 27–47 form a helical membrane-spanning segment; it reads VFYSCIFLIGLLVNVTALWVF. Residues 48–56 are Cytoplasmic-facing; it reads SCTTKKRTT. Residues 57 to 77 traverse the membrane as a helical segment; that stretch reads VTIYMMNVALLDLVFILSLPF. The Extracellular portion of the chain corresponds to 78-95; sequence RMFYYAKGEWPFGDYFCH. The cysteines at positions 94 and 172 are disulfide-linked. The chain crosses the membrane as a helical span at residues 96-116; sequence ILGALVVFYPSLALWLLALIS. At 117–138 the chain is on the cytoplasmic side; sequence ADRYMAIVQPKYAKELKNTGKA. A helical transmembrane segment spans residues 139-159; sequence VLACVGVWIMTLTTTVPLLLL. Topologically, residues 160–191 are extracellular; sequence DEDPDKASSPATCLKISDIIHLKAVNVLNFTR. Asn-188 carries N-linked (GlcNAc...) asparagine glycosylation. The helical transmembrane segment at 192–212 threads the bilayer; sequence LIFFFLIPLFIMIGCYVVIIH. At 213-236 the chain is on the cytoplasmic side; sequence SLLRGQTSKLKPKVKEKSIRIIVT. The chain crosses the membrane as a helical span at residues 237 to 257; that stretch reads LLLQVLACFVPFHICFALLML. At 258–268 the chain is on the extracellular side; sequence QGEENSYSPWG. A helical membrane pass occupies residues 269-289; it reads AFTTFLMNLSTCLDVVLYYIV. Over 290 to 331 the chain is Cytoplasmic; the sequence is SKQFQARVISVMLYRNYLRSVRRKSVRSGSLRSLSNMNSEML. Phosphoserine is present on Ser-322.

It belongs to the G-protein coupled receptor 1 family. As to expression, expressed in testis, spleen and brain (at protein level).

It is found in the cell membrane. The protein resides in the cytoplasmic vesicle membrane. Functionally, g protein-coupled receptor (GPCR) that plays a role in diverse physiological processes particularly within the immune and nervous systems. Becomes active when triggered by various endogenous ligands including endocannabinoid N-arachidonyl glycine (NAGly), delta-9-tetrahydrocannabinol or resolvin D2/RvD2 derived from the omega-3 fatty acid docosahexaenoic acid (DHA). Upon RvD2 binding, facilitates the resolution of inflammation, aiding in tissue repair and homeostasis. Mechanistically, RvD2 ligation initiates Galphas protein coupling, activation of cAMP-PKA signaling pathway and phosphorylation of STAT3, leading to RvD2-stimulated macrophage phagocytosis. Mediates NAGly-induced process of reorganization of actin filaments and induction of acrosomal exocytosis. Activation by N-arachidonoyl glycine (NAGly) can also induce apoptosis in macrophages. Plays a role in homeostasis of CD8+ subsets of intraepithelial lymphocytes (IELs) (CD8alphaalpha and CD8alphabeta IELs) in small intestine by supporting preferential migration of CD8alphaalpha T-cells to intraepithelial compartment over lamina propria compartment, and by mediating their reconstitution into small intestine after bone marrow transplant. Participates also in hypotensive responses, mediating reduction in intraocular and blood pressure. This Rattus norvegicus (Rat) protein is N-arachidonyl glycine receptor.